A 156-amino-acid polypeptide reads, in one-letter code: Small ribosomal subunit protein uS7 (156 aa).

The protein belongs to the universal ribosomal protein uS7 family. As to quaternary structure, part of the 30S ribosomal subunit. Contacts proteins S9 and S11.

Functionally, one of the primary rRNA binding proteins, it binds directly to 16S rRNA where it nucleates assembly of the head domain of the 30S subunit. Is located at the subunit interface close to the decoding center, probably blocks exit of the E-site tRNA. The protein is Small ribosomal subunit protein uS7 of Lactobacillus helveticus (strain DPC 4571).